The primary structure comprises 375 residues: MDRDLNEDDSVVDLSFEAESPLAPPTELLERLPSYDWLLQGGRGQIFFPPLEAPGRPQEQRSWPSFLEHRVPAMTEEVAREALLSFVDSKCCYSSTVAGDLVIQELKRQTLCRYRLETFSESRISEWTFQPFTNHSVDGPQRGASPRLWDIKVQGPPMFQEDTRKFQVPHSSLVKECHKCHGRGRYKCSGCHGAGTVRCPSCCGAKRKAKQSRRCQLCAGSGRRRCSTCSGRGNKTCATCKGEKKLLHFIQLVIMWKNSLFEFVSEHRLNCPRELLAKAKGENLFKDENSVVYPIVDFPLRDISLASQRGIAEHSAALASRARVLQQRQTIELIPLTEVHYWYQGKTYVYYIYGTDHQVYAVDYPERYCCGCTIV.

In terms of tissue distribution, expressed in enterocytes of small and large intestinal mucosa (at protein level). Expressed in chromaffine and interstitial cells. Expressed in peripheral blood and gingival cells.

It is found in the cytoplasm. Its subcellular location is the nucleus. Its function is as follows. Plays a role in odontogenesis. This chain is Protein SSUH2 homolog, found in Homo sapiens (Human).